We begin with the raw amino-acid sequence, 333 residues long: Protoheme IX farnesyltransferase (333 aa).

The segment covering 1 to 13 has biased composition (low complexity); the sequence is MVSSTSQIISTSP. Positions 1 to 21 are disordered; that stretch reads MVSSTSQIISTSPSRDDVVPS. Transmembrane regions (helical) follow at residues 38-58, 63-83, 109-129, 132-152, 160-180, 188-208, 245-265, and 286-306; these read LIPLLLATTLGGMALSEGWPL, LACTLGGGALAAAAAGALNCL, AVFTGAISCTLAAAALLVSGV, LAAGLSLLGLCSYVLLYTAFL, IVIGGVAGAIPPLVGAAAATG, WLFALVMVWTPAHFWALAILL, CFGVFALPEGGALYGILLVPF, and AKGLFRWSILYMFGICLLLVV.

Belongs to the UbiA prenyltransferase family. Protoheme IX farnesyltransferase subfamily.

The protein resides in the cell inner membrane. The catalysed reaction is heme b + (2E,6E)-farnesyl diphosphate + H2O = Fe(II)-heme o + diphosphate. It functions in the pathway porphyrin-containing compound metabolism; heme O biosynthesis; heme O from protoheme: step 1/1. Converts heme B (protoheme IX) to heme O by substitution of the vinyl group on carbon 2 of heme B porphyrin ring with a hydroxyethyl farnesyl side group. This is Protoheme IX farnesyltransferase from Prochlorococcus marinus (strain SARG / CCMP1375 / SS120).